The chain runs to 129 residues: Aldose 1-epimerase (129 aa).

This sequence belongs to the aldose epimerase family.

The enzyme catalyses alpha-D-glucose = beta-D-glucose. The protein operates within carbohydrate metabolism; hexose metabolism. Mutarotase converts alpha-aldose to the beta-anomer. It is active on D-glucose, L-arabinose, D-xylose, D-galactose, maltose and lactose. The chain is Aldose 1-epimerase (galM) from Lactobacillus helveticus (Lactobacillus suntoryeus).